Reading from the N-terminus, the 1311-residue chain is Clustered mitochondria protein homolog (1311 aa).

The segment at 1–46 (MAATNEVIPTSENPSDVSGSSQKLATEETALANGVDHEEEDSGEAG) is disordered. Residues 7 to 24 (VIPTSENPSDVSGSSQKL) are compositionally biased toward polar residues. In terms of domain architecture, Clu spans 335–579 (DITRTQENYL…RVTPLDITWM (245 aa)). Disordered regions lie at residues 629–691 (ERKR…QERI) and 915–965 (QSQT…VNAS). Positions 655–691 (EASKSDEPTENGELAKKADESDKDAEPSKPAADQERI) are enriched in basic and acidic residues. The span at 915-930 (QSQTEAAAAPPTTNGE) shows a compositional bias: polar residues. 3 TPR repeats span residues 1034-1067 (ARVY…SERT), 1076-1109 (LLNY…WKVV), and 1118-1151 (ITTI…CEEV). The tract at residues 1236 to 1311 (VSPRVTLGQT…RGGAAAAAGK (76 aa)) is disordered. Residues 1242-1253 (LGQTQLQPQVGQ) are compositionally biased toward polar residues. A compositionally biased stretch (basic and acidic residues) spans 1259-1279 (AGRDSRSSRGLDSRSIDELLK). Positions 1289-1303 (KNKKRPGRSNPKRRG) are enriched in basic residues.

This sequence belongs to the CLU family. May associate with the eukaryotic translation initiation factor 3 (eIF-3) complex.

It localises to the cytoplasm. MRNA-binding protein involved in proper cytoplasmic distribution of mitochondria. The sequence is that of Clustered mitochondria protein homolog from Sclerotinia sclerotiorum (strain ATCC 18683 / 1980 / Ss-1) (White mold).